The chain runs to 495 residues: Putative myristoylated membrane protein 458R (495 aa).

A lipid anchor (N-myristoyl glycine; by host) is attached at glycine 2. N-linked (GlcNAc...) asparagine; by host glycans are attached at residues asparagine 58, asparagine 71, asparagine 72, asparagine 103, and asparagine 111. Residues 150 to 182 (HLKEIHKIITKEVENAKNNNKDVTKLIEQFSQA) adopt a coiled-coil conformation. The next 2 membrane-spanning stretches (helical) occupy residues 194-214 (ILSLIIFSTAFLGLGGVYVGG) and 216-236 (IAFPVTLLLSILAFYQYFNWT). 5 N-linked (GlcNAc...) asparagine; by host glycosylation sites follow: asparagine 262, asparagine 314, asparagine 317, asparagine 349, and asparagine 457. A helical transmembrane segment spans residues 469-489 (LWLLCVAVILLFIGIIGMGLG).

It belongs to the IIV-6 118L/458R family.

The protein localises to the membrane. This is Putative myristoylated membrane protein 458R from Acheta domesticus (House cricket).